Consider the following 1275-residue polypeptide: Inner capsid protein lambda-1 (1275 aa).

Basic residues predominate over residues 1–12 (MKRIPRKTKGKS). A disordered region spans residues 1-149 (MKRIPRKTKG…DNEGGSNQKP (149 aa)). Composition is skewed to basic and acidic residues over residues 18–35 (DSTE…DKQN) and 75–117 (NNDE…DKSK). The span at 118 to 149 (AQVTYSDTGINNANELSRSGNVDNEGGSNQKP) shows a compositional bias: polar residues. Residues 181-203 (YQCHVCSAVLFSPLDLDAHVASH) form a C2H2-type zinc finger.

It belongs to the orthoreovirus lambda-1 protein family. As to quaternary structure, homodecamer; each decamer is made up of two conformers of VP2, called VP2A and VP2B. 12 homodecamers assemble to form an icosahedral capsid. Interacts with protein mu-NS; in viral inclusions. It depends on Mg(2+) as a cofactor. Requires Mn(2+) as cofactor.

Its subcellular location is the virion. The catalysed reaction is ATP + H2O = ADP + phosphate + H(+). Functionally, inner capsid protein that self-assembles to form an icosahedral capsid with a T=2 symmetry, which consists of 120 copies of VP2, with channels at each of its five-fold vertices. This capsid constitutes the innermost concentric layer of the viral mature particle. Displays NTPase, RNA 5'-triphosphatase (RTPase) and RNA helicase activities. Helicase activity might be involved in unwinding or reannealing dsRNA during RNA synthesis. RTPase enzymatic activity represents the first step in RNA capping, which yields a 5'-diphosphorylated plus-strand RNA. The protein is Inner capsid protein lambda-1 (L3) of Reovirus type 3 (strain Dearing) (T3D).